The chain runs to 311 residues: Phospholipid phosphatase 3 (311 aa).

The Cytoplasmic segment spans residues 1 to 33 (MQNYKYDKAIVPESKNGGSPALNNNPRRSGSKR). At S19 the chain carries Phosphoserine. The chain crosses the membrane as a helical span at residues 34-54 (VLLICLDLFCLFMAGLPFLII). Topologically, residues 55–85 (ETSTIKPYHRGFYCNDESIKYPLKTGETIND) are extracellular. A helical membrane pass occupies residues 86–106 (AVLCAVGIVIAILAIITGEFY). The Cytoplasmic segment spans residues 107–122 (RIYYLKKSRSTIQNPY). The Dityrosine basolateral targeting motif signature appears at 109–110 (YY). Residues 123–143 (VAALYKQVGCFLFGCAISQSF) traverse the membrane as a helical segment. The Extracellular portion of the chain corresponds to 144-193 (TDIAKVSIGRLRPHFLSVCNPDFSQINCSEGYIQNYRCRGDDSKVQEARK). The phosphatase sequence motif I stretch occupies residues 148–156 (KVSIGRLRP). N170 carries an N-linked (GlcNAc...) asparagine glycan. The Integrin-binding motif signature appears at 182–184 (RGD). Residues 194-214 (SFFSGHASFSMYTMLYLVLYL) traverse the membrane as a helical segment. Residues 196–199 (FSGH) are phosphatase sequence motif II. H199 (proton donors) is an active-site residue. Residues 215–225 (QARFTWRGARL) are Cytoplasmic-facing. A helical membrane pass occupies residues 226 to 243 (LRPLLQFTLIMMAFYTGL). The tract at residues 244 to 255 (SRVSDHKHHPSD) is phosphatase sequence motif III. At 244-257 (SRVSDHKHHPSDVL) the chain is on the extracellular side. The active-site Nucleophile is the H251. A helical transmembrane segment spans residues 258–278 (AGFAQGALVACCIVFFVSDLF). Residues 275-311 (SDLFKTKTTLSLPAPAIRKEILSPVDIIDRNNHHNMM) form a mediates interaction with CTNND1 region. Residues 279-311 (KTKTTLSLPAPAIRKEILSPVDIIDRNNHHNMM) lie on the Cytoplasmic side of the membrane.

The protein belongs to the PA-phosphatase related phosphoesterase family. As to quaternary structure, forms functional homodimers and homooligomers that are not required for substrate recognition and catalytic activity. Can also form heterooligomers with other PLPP2 and PLPP3. Interacts with CTNND1; negatively regulates the PLPP3-mediated stabilization of beta-catenin/CTNNB1. Post-translationally, N-glycosylated. Contains high-mannose oligosaccharides. Ubiquitously expressed. Highly expressed in heart and placenta.

It is found in the cell membrane. The protein localises to the basolateral cell membrane. It localises to the endoplasmic reticulum membrane. Its subcellular location is the endoplasmic reticulum-Golgi intermediate compartment membrane. The protein resides in the golgi apparatus membrane. It is found in the golgi apparatus. The protein localises to the trans-Golgi network membrane. It localises to the membrane raft. It carries out the reaction a 1,2-diacyl-sn-glycero-3-phosphate + H2O = a 1,2-diacyl-sn-glycerol + phosphate. The enzyme catalyses 1,2-dihexadecanoyl-sn-glycero-3-phosphate + H2O = 1,2-dihexadecanoyl-sn-glycerol + phosphate. It catalyses the reaction 1,2-di-(9Z-octadecenoyl)-sn-glycero-3-phosphate + H2O = 1,2-di-(9Z-octadecenoyl)-sn-glycerol + phosphate. The catalysed reaction is a monoacyl-sn-glycero-3-phosphate + H2O = a monoacylglycerol + phosphate. It carries out the reaction (9Z)-octadecenoyl-sn-glycero-3-phosphate + H2O = (9Z-octadecenoyl)-glycerol + phosphate. The enzyme catalyses sphing-4-enine 1-phosphate + H2O = sphing-4-enine + phosphate. It catalyses the reaction an N-acylsphing-4-enine 1-phosphate + H2O = an N-acylsphing-4-enine + phosphate. The catalysed reaction is N-(octanoyl)-sphing-4-enine-1-phosphate + H2O = N-octanoylsphing-4-enine + phosphate. It carries out the reaction N-(9Z-octadecenoyl)-ethanolamine phosphate + H2O = N-(9Z-octadecenoyl) ethanolamine + phosphate. It participates in lipid metabolism; phospholipid metabolism. With respect to regulation, magnesium-independent phospholipid phosphatase. Insensitive to N-ethylmaleimide. Inhibited by sphingosine, zinc ions and modestly by propanolol. In terms of biological role, magnesium-independent phospholipid phosphatase of the plasma membrane that catalyzes the dephosphorylation of a variety of glycerolipid and sphingolipid phosphate esters including phosphatidate/PA, lysophosphatidate/LPA, diacylglycerol pyrophosphate/DGPP, sphingosine 1-phosphate/S1P and ceramide 1-phosphate/C1P. Also acts on N-oleoyl ethanolamine phosphate/N-(9Z-octadecenoyl)-ethanolamine phosphate, a potential physiological compound. Has both an extracellular and an intracellular phosphatase activity, allowing the hydrolysis and the cellular uptake of these bioactive lipid mediators from the milieu, regulating signal transduction in different cellular processes. Through the dephosphorylation of extracellular sphingosine-1-phosphate and the regulation of its extra- and intracellular availability, plays a role in vascular homeostasis, regulating endothelial cell migration, adhesion, survival, proliferation and the production of pro-inflammatory cytokines. By maintaining the appropriate levels of this lipid in the cerebellum, also ensure its proper development and function. Through its intracellular lipid phosphatase activity may act in early compartments of the secretory pathway, regulating the formation of Golgi to endoplasmic reticulum retrograde transport carriers. Its function is as follows. Independently of this phosphatase activity may also function in the Wnt signaling pathway and the stabilization of beta-catenin/CTNNB1, thereby regulating cell proliferation, migration and differentiation in angiogenesis or yet in tumor growth. Also plays a role in integrin-mediated cell-cell adhesion in angiogenesis. This chain is Phospholipid phosphatase 3, found in Homo sapiens (Human).